A 218-amino-acid polypeptide reads, in one-letter code: ATP phosphoribosyltransferase (218 aa).

The protein belongs to the ATP phosphoribosyltransferase family. Short subfamily. Heteromultimer composed of HisG and HisZ subunits.

It localises to the cytoplasm. The catalysed reaction is 1-(5-phospho-beta-D-ribosyl)-ATP + diphosphate = 5-phospho-alpha-D-ribose 1-diphosphate + ATP. Its pathway is amino-acid biosynthesis; L-histidine biosynthesis; L-histidine from 5-phospho-alpha-D-ribose 1-diphosphate: step 1/9. In terms of biological role, catalyzes the condensation of ATP and 5-phosphoribose 1-diphosphate to form N'-(5'-phosphoribosyl)-ATP (PR-ATP). Has a crucial role in the pathway because the rate of histidine biosynthesis seems to be controlled primarily by regulation of HisG enzymatic activity. The sequence is that of ATP phosphoribosyltransferase from Trichormus variabilis (strain ATCC 29413 / PCC 7937) (Anabaena variabilis).